A 258-amino-acid chain; its full sequence is Ubiquinone/menaquinone biosynthesis C-methyltransferase UbiE (258 aa).

Residues Thr-81, Asp-102, and 130 to 131 (NA) contribute to the S-adenosyl-L-methionine site.

It belongs to the class I-like SAM-binding methyltransferase superfamily. MenG/UbiE family.

The enzyme catalyses a 2-demethylmenaquinol + S-adenosyl-L-methionine = a menaquinol + S-adenosyl-L-homocysteine + H(+). It catalyses the reaction a 2-methoxy-6-(all-trans-polyprenyl)benzene-1,4-diol + S-adenosyl-L-methionine = a 5-methoxy-2-methyl-3-(all-trans-polyprenyl)benzene-1,4-diol + S-adenosyl-L-homocysteine + H(+). Its pathway is quinol/quinone metabolism; menaquinone biosynthesis; menaquinol from 1,4-dihydroxy-2-naphthoate: step 2/2. It participates in cofactor biosynthesis; ubiquinone biosynthesis. In terms of biological role, methyltransferase required for the conversion of demethylmenaquinol (DMKH2) to menaquinol (MKH2) and the conversion of 2-polyprenyl-6-methoxy-1,4-benzoquinol (DDMQH2) to 2-polyprenyl-3-methyl-6-methoxy-1,4-benzoquinol (DMQH2). This chain is Ubiquinone/menaquinone biosynthesis C-methyltransferase UbiE, found in Rhizobium rhizogenes (strain K84 / ATCC BAA-868) (Agrobacterium radiobacter).